The chain runs to 148 residues: Small ribosomal subunit protein bS16 (148 aa).

Residues 111–122 (AAAGEEPVAEAT) are compositionally biased toward low complexity. Residues 111–148 (AAAGEEPVAEATTPKKKGGKKAEAEDKAEEQKSEEGQA) are disordered. The span at 130 to 148 (KKAEAEDKAEEQKSEEGQA) shows a compositional bias: basic and acidic residues.

It belongs to the bacterial ribosomal protein bS16 family.

The sequence is that of Small ribosomal subunit protein bS16 from Saccharopolyspora erythraea (strain ATCC 11635 / DSM 40517 / JCM 4748 / NBRC 13426 / NCIMB 8594 / NRRL 2338).